The following is a 302-amino-acid chain: Oxygen-dependent coproporphyrinogen-III oxidase (302 aa).

Position 94 (Ser94) interacts with substrate. Residues His98 and His108 each coordinate a divalent metal cation. The active-site Proton donor is the His108. 110-112 (NVR) lines the substrate pocket. Residues His147 and His177 each coordinate a divalent metal cation. An important for dimerization region spans residues 242–277 (YVEFNLVYDRGTLFGLQTGGRTESILMSMPPLVRWQ). 260–262 (GGR) lines the substrate pocket.

The protein belongs to the aerobic coproporphyrinogen-III oxidase family. Homodimer. A divalent metal cation is required as a cofactor.

The protein localises to the cytoplasm. It carries out the reaction coproporphyrinogen III + O2 + 2 H(+) = protoporphyrinogen IX + 2 CO2 + 2 H2O. The protein operates within porphyrin-containing compound metabolism; protoporphyrin-IX biosynthesis; protoporphyrinogen-IX from coproporphyrinogen-III (O2 route): step 1/1. Its function is as follows. Involved in the heme biosynthesis. Catalyzes the aerobic oxidative decarboxylation of propionate groups of rings A and B of coproporphyrinogen-III to yield the vinyl groups in protoporphyrinogen-IX. The sequence is that of Oxygen-dependent coproporphyrinogen-III oxidase from Shewanella putrefaciens (strain CN-32 / ATCC BAA-453).